The sequence spans 661 residues: MDSLKSGLATAGKFTYKGTKTVAKAGYNTSKKHMHKKDKDTHHTDHHEEDEYSEDYHTPRSVNTLRDPSSFPPPPTRSGQAGHVAGNTAGSIAGNYSGYSQPTAAANNTISYNAQAQNTPYSSPAQQQPVSPQPPVQNSQYNPTQNYAIQQPQQPAGTNANYSYGNQQHPAGQAPIVNSITPNHQYNANNTFQSNLPNQQLNVAAPTQSTNNNFNQMAANNTYTNSAQVAYNSQQQQLQQNSQQNTYSNAPYQVQAQAAYNPLPQQQQQQQQQPEYNTQLQQNQQLHNQQAYGQQQQIYSNNTQPQYVSQTQQTSYTQNAPPQQTRSPEQPVYGQGITPPVQANAYRPMPSIPPDVNQTAITSTNSANEALQNRIPMNNVDLSSLPPPPTHRDRGRASVENETIDENMQTNNSTIDSSSVASADINNNSIRNIPAPAVGPPGAATRAVPPPPPRRTTSQSMSTNSVVETSPGINSIEQINNYYDGTYAGHSANERPPITNTLKRGTPPLPRRSTSTKMNTQPNPQTPISPSRDTNMDLQRRSTVSSIQSSNRPMPDPPIRKDNIQENNIESKQVNQEVNSQMSVSNIGIGDITSELQHIKLKSVGNSYEREIHGEAATEVVHNKPLKKKPPTVPKKKDSLKGKAPPPVPKKKPTLTSFVHS.

Disordered stretches follow at residues Thr-19–Tyr-99, Ala-116–Asn-142, Gln-154–Ser-194, Leu-263–Ser-419, Arg-431–Ile-473, Tyr-487–Asn-563, and Glu-615–Ser-661. The span at Lys-37 to Thr-58 shows a compositional bias: basic and acidic residues. Residues Pro-120–Asn-142 show a composition bias toward low complexity. Low complexity predominate over residues Leu-263 to Gln-318. Polar residues-rich tracts occupy residues Asn-319–Pro-328 and Val-356–Leu-371. A compositionally biased stretch (basic and acidic residues) spans Thr-390–Val-399. Over residues Glu-406–Ser-419 the composition is skewed to polar residues. Residues Pro-434–Ala-447 are compositionally biased toward low complexity. 3 stretches are compositionally biased toward polar residues: residues Ser-458 to Ile-473, Arg-512 to Asp-533, and Arg-541 to Arg-552.

Belongs to the AIM3 family.

The protein localises to the membrane raft. The chain is Altered inheritance of mitochondria protein 3-1 (AIM3-1) from Candida glabrata (strain ATCC 2001 / BCRC 20586 / JCM 3761 / NBRC 0622 / NRRL Y-65 / CBS 138) (Yeast).